Reading from the N-terminus, the 379-residue chain is Lactosylceramide 1,3-N-acetyl-beta-D-glucosaminyltransferase A (379 aa).

The Cytoplasmic portion of the chain corresponds to 1–12 (MFMNCRRVKKWH). The helical; Signal-anchor for type II membrane protein transmembrane segment at 13 to 30 (FLQLLSMCCVMSVLMVCW) threads the bilayer. Topologically, residues 31–379 (EHVDHHVVSH…NTYSCMAAFT (349 aa)) are lumenal. Residues N57, N113, N168, and N277 are each glycosylated (N-linked (GlcNAc...) asparagine).

This sequence belongs to the glycosyltransferase 31 family.

It is found in the golgi apparatus membrane. It carries out the reaction a beta-D-Gal-(1-&gt;4)-beta-D-Glc-(1&lt;-&gt;1)-Cer(d18:1(4E)) + UDP-N-acetyl-alpha-D-glucosamine = a beta-D-GlcNAc-(1-&gt;3)-beta-D-Gal-(1-&gt;4)-beta-D-Glc-(1&lt;-&gt;1)-Cer(d18:1(4E)) + UDP + H(+). The catalysed reaction is a neolactoside nLc4Cer(d18:1(4E)) + UDP-N-acetyl-alpha-D-glucosamine = a neolactoside IV(3)-beta-GlcNAc-nLc4Cer(d18:1(4E)) + UDP + H(+). Its pathway is protein modification; protein glycosylation. Beta-1,3-N-acetylglucosaminyltransferase that plays a key role in the synthesis of lacto- or neolacto-series carbohydrate chains on glycolipids. The polypeptide is Lactosylceramide 1,3-N-acetyl-beta-D-glucosaminyltransferase A (b3gnt5a) (Danio rerio (Zebrafish)).